Here is a 150-residue protein sequence, read N- to C-terminus: Ribosomal RNA large subunit methyltransferase H (150 aa).

S-adenosyl-L-methionine-binding positions include Ala-100 and 118–123 (LSEMTF).

It belongs to the RNA methyltransferase RlmH family. In terms of assembly, homodimer.

Its subcellular location is the cytoplasm. The enzyme catalyses pseudouridine(1915) in 23S rRNA + S-adenosyl-L-methionine = N(3)-methylpseudouridine(1915) in 23S rRNA + S-adenosyl-L-homocysteine + H(+). In terms of biological role, specifically methylates the pseudouridine at position 1915 (m3Psi1915) in 23S rRNA. The chain is Ribosomal RNA large subunit methyltransferase H from Helicobacter pylori (strain HPAG1).